A 106-amino-acid chain; its full sequence is Malonate decarboxylase acyl carrier protein (106 aa).

Position 28 is an O-(phosphoribosyl dephospho-coenzyme A)serine (serine 28).

It belongs to the MdcC family. Covalently binds the prosthetic group of malonate decarboxylase.

The protein localises to the cytoplasm. Subunit of malonate decarboxylase, it is an acyl carrier protein to which acetyl and malonyl thioester residues are bound via a 2'-(5''-phosphoribosyl)-3'-dephospho-CoA prosthetic group and turn over during the catalytic mechanism. The sequence is that of Malonate decarboxylase acyl carrier protein from Stenotrophomonas maltophilia (strain R551-3).